The chain runs to 764 residues: 5-methyltetrahydropteroyltriglutamate--homocysteine methyltransferase (764 aa).

Residues arginine 16 to lysine 19 and lysine 121 contribute to the 5-methyltetrahydropteroyltri-L-glutamate site. Residues isoleucine 440–serine 442 and glutamate 493 each bind L-homocysteine. L-methionine is bound by residues isoleucine 440–serine 442 and glutamate 493. Residues arginine 524–cysteine 525 and tryptophan 570 contribute to the 5-methyltetrahydropteroyltri-L-glutamate site. Residue aspartate 608 coordinates L-homocysteine. Aspartate 608 provides a ligand contact to L-methionine. 5-methyltetrahydropteroyltri-L-glutamate is bound at residue glutamate 614. Zn(2+)-binding residues include histidine 650, cysteine 652, and glutamate 674. Residue histidine 703 is the Proton donor of the active site. Cysteine 735 contacts Zn(2+).

It belongs to the vitamin-B12 independent methionine synthase family. Zn(2+) is required as a cofactor.

The catalysed reaction is 5-methyltetrahydropteroyltri-L-glutamate + L-homocysteine = tetrahydropteroyltri-L-glutamate + L-methionine. Its pathway is amino-acid biosynthesis; L-methionine biosynthesis via de novo pathway; L-methionine from L-homocysteine (MetE route): step 1/1. Catalyzes the transfer of a methyl group from 5-methyltetrahydrofolate to homocysteine resulting in methionine formation. This chain is 5-methyltetrahydropteroyltriglutamate--homocysteine methyltransferase, found in Burkholderia lata (strain ATCC 17760 / DSM 23089 / LMG 22485 / NCIMB 9086 / R18194 / 383).